Here is a 166-residue protein sequence, read N- to C-terminus: Bacterial non-heme ferritin (166 aa).

A Ferritin-like diiron domain is found at Leu2–Gly145. Fe cation-binding residues include Glu17, Glu50, His53, Glu94, and Gln127.

The protein belongs to the ferritin family. Prokaryotic subfamily.

The protein resides in the cytoplasm. It carries out the reaction 4 Fe(2+) + O2 + 6 H2O = 4 iron(III) oxide-hydroxide + 12 H(+). In terms of biological role, iron-storage protein. The protein is Bacterial non-heme ferritin (ftnA) of Staphylococcus aureus (strain MRSA252).